We begin with the raw amino-acid sequence, 287 residues long: Nucleotide-binding protein TGRD_433 (287 aa).

Gly9–Ser16 is an ATP binding site. Asp60–Ala63 is a binding site for GTP.

It belongs to the RapZ-like family.

Its function is as follows. Displays ATPase and GTPase activities. The polypeptide is Nucleotide-binding protein TGRD_433 (Endomicrobium trichonymphae).